We begin with the raw amino-acid sequence, 302 residues long: Proline dehydrogenase 1 (302 aa).

K95 provides a ligand contact to substrate. The active site involves D129. Residues M130 and Q158 each coordinate FAD. R179 is a catalytic residue. FAD contacts are provided by residues 182–184 and 221–222; these read KGA and TH. 283-284 serves as a coordination point for substrate; that stretch reads RR.

Belongs to the proline oxidase family. It depends on FAD as a cofactor.

It carries out the reaction L-proline + a quinone = (S)-1-pyrroline-5-carboxylate + a quinol + H(+). It functions in the pathway amino-acid degradation; L-proline degradation into L-glutamate; L-glutamate from L-proline: step 1/2. In terms of biological role, converts proline to delta-1-pyrroline-5-carboxylate. This is Proline dehydrogenase 1 (fadM) from Bacillus subtilis subsp. natto.